Here is a 475-residue protein sequence, read N- to C-terminus: Trigger factor (475 aa).

The PPIase FKBP-type domain maps to 165–250; the sequence is GDRVTIDYLG…VKAVFRPDEL (86 aa). Residues 439 to 466 show a composition bias toward basic and acidic residues; it reads EYDETDVPEEKPAKKKSAVKEKSAEKTS. The segment at 439–475 is disordered; that stretch reads EYDETDVPEEKPAKKKSAVKEKSAEKTSAKKKAPKKA.

Belongs to the FKBP-type PPIase family. Tig subfamily.

It localises to the cytoplasm. It carries out the reaction [protein]-peptidylproline (omega=180) = [protein]-peptidylproline (omega=0). Its function is as follows. Involved in protein export. Acts as a chaperone by maintaining the newly synthesized protein in an open conformation. Functions as a peptidyl-prolyl cis-trans isomerase. The chain is Trigger factor from Bartonella tribocorum (strain CIP 105476 / IBS 506).